The chain runs to 148 residues: Nickel and cobalt resistance protein CnrR (148 aa).

Residues 1 to 26 (MMKSRTRRLSLSTLFGALLGVSVAAA) form the signal peptide. Residues 28 to 148 (LYYSHRNEAG…LIDALRRGSQ (121 aa)) lie on the Periplasmic side of the membrane. The stretch at 54 to 117 (NEREILELKE…AAGDLQRATL (64 aa)) forms a coiled coil.

The protein to A.xylosoxydans NccX.

It is found in the periplasm. Functionally, cnrH alone is able to activate cnr expression, while both CnrY and CrnR (CnrX) are needed for nickel induction of CnrH. Has been suggested to bind nickel. The sequence is that of Nickel and cobalt resistance protein CnrR (cnrR) from Cupriavidus metallidurans (strain ATCC 43123 / DSM 2839 / NBRC 102507 / CH34) (Ralstonia metallidurans).